The chain runs to 329 residues: Putative dehydrogenase RB0419 (329 aa).

This sequence belongs to the ornithine cyclodeaminase/mu-crystallin family.

The chain is Putative dehydrogenase RB0419 from Rhizobium meliloti (strain 1021) (Ensifer meliloti).